A 436-amino-acid polypeptide reads, in one-letter code: Histone acetyltransferase type B subunit 2 (436 aa).

5 WD repeats span residues 136–176 (DHKG…SLPT), 187–227 (GHTK…KGNK), 237–277 (HHSS…TTRA), 284–324 (QHRD…TKLH), and 328–368 (SHTD…EEQT). Residues 370–374 (EDAQD) form an interaction with the histone H4 N-terminus region. Residues 385–425 (GHTNRISDFSWNLNDPWVLCSAAEDNLLQVWKVADAIVGKD) form a WD 6 repeat.

Belongs to the WD repeat RBAP46/RBAP48/MSI1 family. In terms of assembly, component of the HAT-B complex composed of at least hat1 and hat2. The HAT-B complex binds to histone H4 tail.

The protein localises to the cytoplasm. It is found in the nucleus. Functionally, regulatory subunit of the histone acetylase B (HAT-B) complex. The complex acetylates 'Lys-12' of histone H4 which is required for telomeric silencing. This chain is Histone acetyltransferase type B subunit 2 (hat2), found in Aspergillus fumigatus (strain ATCC MYA-4609 / CBS 101355 / FGSC A1100 / Af293) (Neosartorya fumigata).